A 291-amino-acid chain; its full sequence is m-AAA protease-interacting protein 1, mitochondrial (291 aa).

Residues M1–Y96 constitute a mitochondrion transit peptide.

In terms of assembly, interacts with AFG3L2. Interacts with SPG7. Interacts with SMDT1/EMRE (via the N-terminal transit peptide); interaction is direct and takes place before maturation of SMDT1/EMRE.

It is found in the mitochondrion matrix. Promotes sorting of SMDT1/EMRE in mitochondria by ensuring its maturation. Interacts with the transit peptide region of SMDT1/EMRE precursor protein in the mitochondrial matrix, leading to protect it against protein degradation by YME1L1, thereby ensuring SMDT1/EMRE maturation by the mitochondrial processing peptidase (PMPCA and PMPCB). This Homo sapiens (Human) protein is m-AAA protease-interacting protein 1, mitochondrial.